A 46-amino-acid chain; its full sequence is Large ribosomal subunit protein bL36 (46 aa).

It belongs to the bacterial ribosomal protein bL36 family.

This chain is Large ribosomal subunit protein bL36, found in Klebsiella pneumoniae (strain 342).